Here is an 86-residue protein sequence, read N- to C-terminus: Neuropeptide-like 2 (86 aa).

The signal sequence occupies residues 1 to 19; sequence MAKLAICILVFALFALALS. 2 consecutive propeptides follow at residues 20 to 34 and 45 to 86; these read ARVPREESNPAQEFL and IEKL…AAST.

As to expression, hemolymph (at protein level).

Its subcellular location is the secreted. The sequence is that of Neuropeptide-like 2 (Nplp2) from Drosophila melanogaster (Fruit fly).